Here is a 1312-residue protein sequence, read N- to C-terminus: DNA repair protein RAD50.L (1312 aa).

10 residues coordinate ATP: R13, N38, G39, G41, K42, T43, T44, V67, D69, and Q159. T43 lines the Mg(2+) pocket. Q159 is a Mg(2+) binding site. Coiled-coil stretches lie at residues 203 to 342, 415 to 558, and 587 to 628; these read VREY…LNRE, LREF…IKSR, and INQT…FEEK. Residues 635-734 form the Zinc-hook domain; sequence SQDFDSDLSR…RKDDMMELKP (100 aa). Zn(2+)-binding residues include C681 and C684. Residues 712–1070 are a coiled coil; sequence LKSAEGELKR…ENKSESLKTN (359 aa).

Belongs to the SMC family. RAD50 subfamily. In terms of assembly, component of the MRN complex composed of two heterodimers RAD50 and MRE11 associated with a single NBN. It depends on Zn(2+) as a cofactor.

It is found in the nucleus. The protein resides in the chromosome. Its subcellular location is the telomere. The catalysed reaction is ATP + H2O = ADP + phosphate + H(+). Component of the MRN complex, which plays a central role in double-strand break (DSB) repair, DNA recombination, maintenance of telomere integrity and meiosis. The MRN complex is involved in the repair of DNA double-strand breaks (DSBs) via homologous recombination (HR), an error-free mechanism which primarily occurs during S and G2 phases. The complex (1) mediates the end resection of damaged DNA, which generates proper single-stranded DNA, a key initial steps in HR, and is (2) required for the recruitment of other repair factors and efficient activation of ATM and ATR upon DNA damage. The MRN complex possesses single-strand endonuclease activity and double-strand-specific 3'-5' exonuclease activity, which are provided by mre11, to initiate end resection, which is required for single-strand invasion and recombination. Within the complex, rad50 is both required to bind DNA ends and hold them in close proximity and regulate the activity of MRE11. Rad50 provides an ATP-dependent control of MRE11 by positioning DNA ends into the mre11 active site: ATP-binding induces a large structural change from an open form with accessible MRE11 nuclease sites into a closed form. The MRN complex is also required for DNA damage signaling via activation of the atm and atr kinases: the nuclease activity of mre11 is not required to activate ATM and ATR. The MRN complex promotes recruitment of topbp1 to DNA damage sites. The MRN complex and rbbp8/CtIP are also required for chromosome alignment during metaphase. The sequence is that of DNA repair protein RAD50.L from Xenopus laevis (African clawed frog).